The primary structure comprises 144 residues: Small ribosomal subunit protein bS6 (144 aa).

Positions 97-144 (DTEQSLIMKSKDEKGDKPERSERRRRDDEEGDAAPAATDTDGDNAEAA) are disordered. Residues 105–124 (KSKDEKGDKPERSERRRRDD) show a composition bias toward basic and acidic residues.

The protein belongs to the bacterial ribosomal protein bS6 family.

Its function is as follows. Binds together with bS18 to 16S ribosomal RNA. The polypeptide is Small ribosomal subunit protein bS6 (Xanthomonas campestris pv. campestris (strain 8004)).